The following is a 242-amino-acid chain: 1-(5-phosphoribosyl)-5-[(5-phosphoribosylamino)methylideneamino] imidazole-4-carboxamide isomerase (242 aa).

Residue Asp8 is the Proton acceptor of the active site. The active-site Proton donor is Asp130.

Belongs to the HisA/HisF family.

The protein resides in the cytoplasm. It carries out the reaction 1-(5-phospho-beta-D-ribosyl)-5-[(5-phospho-beta-D-ribosylamino)methylideneamino]imidazole-4-carboxamide = 5-[(5-phospho-1-deoxy-D-ribulos-1-ylimino)methylamino]-1-(5-phospho-beta-D-ribosyl)imidazole-4-carboxamide. It functions in the pathway amino-acid biosynthesis; L-histidine biosynthesis; L-histidine from 5-phospho-alpha-D-ribose 1-diphosphate: step 4/9. The protein is 1-(5-phosphoribosyl)-5-[(5-phosphoribosylamino)methylideneamino] imidazole-4-carboxamide isomerase of Acidithiobacillus ferrooxidans (strain ATCC 53993 / BNL-5-31) (Leptospirillum ferrooxidans (ATCC 53993)).